The following is a 189-amino-acid chain: ATP-dependent protease subunit HslV (189 aa).

The active site involves Thr12. Residues Ser172, Cys175, and Thr178 each contribute to the Na(+) site.

Belongs to the peptidase T1B family. HslV subfamily. As to quaternary structure, a double ring-shaped homohexamer of HslV is capped on each side by a ring-shaped HslU homohexamer. The assembly of the HslU/HslV complex is dependent on binding of ATP.

It is found in the cytoplasm. The catalysed reaction is ATP-dependent cleavage of peptide bonds with broad specificity.. Allosterically activated by HslU binding. Functionally, protease subunit of a proteasome-like degradation complex believed to be a general protein degrading machinery. The polypeptide is ATP-dependent protease subunit HslV (Ehrlichia canis (strain Jake)).